The sequence spans 451 residues: Phosphoglucosamine mutase (451 aa).

The active-site Phosphoserine intermediate is Ser-107. Ser-107, Asp-246, Asp-248, and Asp-250 together coordinate Mg(2+). Ser-107 is modified (phosphoserine).

This sequence belongs to the phosphohexose mutase family. Mg(2+) is required as a cofactor. Activated by phosphorylation.

The catalysed reaction is alpha-D-glucosamine 1-phosphate = D-glucosamine 6-phosphate. In terms of biological role, catalyzes the conversion of glucosamine-6-phosphate to glucosamine-1-phosphate. The polypeptide is Phosphoglucosamine mutase (Burkholderia lata (strain ATCC 17760 / DSM 23089 / LMG 22485 / NCIMB 9086 / R18194 / 383)).